A 271-amino-acid chain; its full sequence is Bifunctional protein FolD (271 aa).

Residues 154 to 156, serine 181, and isoleucine 222 contribute to the NADP(+) site; that span reads GRS.

Belongs to the tetrahydrofolate dehydrogenase/cyclohydrolase family. Homodimer.

The catalysed reaction is (6R)-5,10-methylene-5,6,7,8-tetrahydrofolate + NADP(+) = (6R)-5,10-methenyltetrahydrofolate + NADPH. It catalyses the reaction (6R)-5,10-methenyltetrahydrofolate + H2O = (6R)-10-formyltetrahydrofolate + H(+). It participates in one-carbon metabolism; tetrahydrofolate interconversion. In terms of biological role, catalyzes the oxidation of 5,10-methylenetetrahydrofolate to 5,10-methenyltetrahydrofolate and then the hydrolysis of 5,10-methenyltetrahydrofolate to 10-formyltetrahydrofolate. The sequence is that of Bifunctional protein FolD from Thermotoga maritima (strain ATCC 43589 / DSM 3109 / JCM 10099 / NBRC 100826 / MSB8).